Reading from the N-terminus, the 305-residue chain is ATP synthase subunit gamma, mitochondrial (305 aa).

It belongs to the ATPase gamma chain family. In terms of assembly, F-type ATPases have 2 components, F(1) - the catalytic core - and F(o) - the membrane proton channel. F(1) has five subunits: alpha(3), beta(3), gamma(1), delta(1), epsilon(1), plus the additional subunit P18 (Tb427.05.1710) that is not present in F(1)F(o) ATP synthase from metazoa. Subunit P18 (Tb927.5.1710) interacts with the alpha subunit with a 1:1 stoichiometry; the interaction is direct. Subunit gamma is part of the central stalk. F(o) has three main subunits: a, b and c. The trypanosomal ATPase complex contains additional subunits that are not present in the F(1)F(o) ATP synthase from metazoa.

The protein localises to the mitochondrion. Its subcellular location is the mitochondrion inner membrane. Mitochondrial membrane ATP synthase (F(1)F(o) ATP synthase) produces ATP from ADP in the presence of a proton gradient across the membrane which is generated by electron transport complexes of the respiratory chain. F-type ATPases consist of two structural domains, F(1) - containing the extramembraneous catalytic core, and F(o) - containing the membrane proton channel, linked together by a central stalk and a peripheral stalk. During catalysis, ATP synthesis in the catalytic domain of F(1) is coupled via a rotary mechanism of the central stalk subunits to proton translocation. Subunits alpha and beta form the catalytic core in F(1). Rotation of the central stalk against the surrounding alpha(3)beta(3) subunits leads to hydrolysis of ATP in three separate catalytic sites on the beta subunits. Contrary to the procyclic, insect form that requires F(1)F(o) ATP synthase for ATP synthesis, the bloodstream form relies on ATP hydrolysis by F(1)F(o) ATP synthase to maintain its mitochondrial membrane potential. The protein is ATP synthase subunit gamma, mitochondrial of Trypanosoma brucei brucei.